Here is a 405-residue protein sequence, read N- to C-terminus: Acetylornithine aminotransferase 1 (405 aa).

Pyridoxal 5'-phosphate is bound by residues 103 to 104 and F136; that span reads GA. R139 is a binding site for N(2)-acetyl-L-ornithine. 221–224 serves as a coordination point for pyridoxal 5'-phosphate; sequence DEVQ. K250 carries the post-translational modification N6-(pyridoxal phosphate)lysine. Position 278 (S278) interacts with N(2)-acetyl-L-ornithine. T279 is a pyridoxal 5'-phosphate binding site.

The protein belongs to the class-III pyridoxal-phosphate-dependent aminotransferase family. ArgD subfamily. In terms of assembly, homodimer. Requires pyridoxal 5'-phosphate as cofactor.

Its subcellular location is the cytoplasm. The catalysed reaction is N(2)-acetyl-L-ornithine + 2-oxoglutarate = N-acetyl-L-glutamate 5-semialdehyde + L-glutamate. Its pathway is amino-acid biosynthesis; L-arginine biosynthesis; N(2)-acetyl-L-ornithine from L-glutamate: step 4/4. The chain is Acetylornithine aminotransferase 1 from Bradyrhizobium diazoefficiens (strain JCM 10833 / BCRC 13528 / IAM 13628 / NBRC 14792 / USDA 110).